The sequence spans 440 residues: Xylose isomerase (440 aa).

Residues His101 and Asp104 contribute to the active site. Mg(2+) is bound by residues Glu232, Glu268, His271, Asp296, Asp307, Asp309, and Asp339.

This sequence belongs to the xylose isomerase family. In terms of assembly, homotetramer. It depends on Mg(2+) as a cofactor.

It localises to the cytoplasm. The enzyme catalyses alpha-D-xylose = alpha-D-xylulofuranose. This Salmonella typhi protein is Xylose isomerase.